We begin with the raw amino-acid sequence, 909 residues long: Cutinase transcription factor 1 alpha (909 aa).

Positions Met1–Ser51 are disordered. Low complexity predominate over residues Pro12–Pro30. The segment at residues Cys61–Cys90 is a DNA-binding region (zn(2)-C6 fungal-type). 3 disordered regions span residues Pro95 to Ala159, Ala651 to Val757, and Leu841 to Ala878. The segment covering Lys110–Gly119 has biased composition (basic and acidic residues). A compositionally biased stretch (polar residues) spans Val142 to Glu156. Residues Gln669–Glu683 are compositionally biased toward basic and acidic residues. 3 stretches are compositionally biased toward polar residues: residues Pro704–Met717, Gly737–Phe755, and Ser865–Ala878.

It localises to the nucleus. The polypeptide is Cutinase transcription factor 1 alpha (CTF1-ALPHA) (Fusarium vanettenii (Neocosmospora pisi)).